A 296-amino-acid polypeptide reads, in one-letter code: Protoheme IX farnesyltransferase (296 aa).

At Met-1 to Val-9 the chain is on the cytoplasmic side. The helical transmembrane segment at Thr-10 to Leu-28 threads the bilayer. At Ala-29–Pro-37 the chain is on the periplasmic side. A helical membrane pass occupies residues Leu-38 to Phe-56. Residues Asn-57–Lys-78 lie on the Cytoplasmic side of the membrane. A helical transmembrane segment spans residues Gly-79–Gly-97. The Periplasmic portion of the chain corresponds to Phe-98–Pro-107. A helical transmembrane segment spans residues Leu-108–Leu-126. Topologically, residues Tyr-127–Pro-197 are cytoplasmic. The chain crosses the membrane as a helical span at residues Val-198–Phe-216. The Periplasmic segment spans residues Ala-217–Tyr-228. The helical transmembrane segment at Ala-229 to Met-247 threads the bilayer. Over Ala-248–Ser-268 the chain is Cytoplasmic. A helical membrane pass occupies residues Ile-269–Asn-287. Over Ser-288 to Trp-296 the chain is Periplasmic.

It belongs to the UbiA prenyltransferase family. Protoheme IX farnesyltransferase subfamily.

The protein resides in the cell inner membrane. The enzyme catalyses heme b + (2E,6E)-farnesyl diphosphate + H2O = Fe(II)-heme o + diphosphate. Its pathway is porphyrin-containing compound metabolism; heme O biosynthesis; heme O from protoheme: step 1/1. Converts heme B (protoheme IX) to heme O by substitution of the vinyl group on carbon 2 of heme B porphyrin ring with a hydroxyethyl farnesyl side group. This chain is Protoheme IX farnesyltransferase, found in Salmonella arizonae (strain ATCC BAA-731 / CDC346-86 / RSK2980).